Here is a 445-residue protein sequence, read N- to C-terminus: Inner membrane metabolite transport protein YgcS (445 aa).

The Cytoplasmic portion of the chain corresponds to M1 to A22. A helical transmembrane segment spans residues L23–I43. The Periplasmic portion of the chain corresponds to Q44–A56. The helical transmembrane segment at G57 to I77 threads the bilayer. The Cytoplasmic portion of the chain corresponds to S78–K85. A helical transmembrane segment spans residues I86–T106. The Periplasmic segment spans residues P107–R114. The chain crosses the membrane as a helical span at residues I115 to F135. At S136–G142 the chain is on the cytoplasmic side. A helical membrane pass occupies residues I143 to G163. Topologically, residues H164–R175 are periplasmic. The chain crosses the membrane as a helical span at residues W176–P196. The Cytoplasmic segment spans residues E197–S253. Residues V254 to A274 traverse the membrane as a helical segment. Over Q275–S286 the chain is Periplasmic. Residues L287 to L307 traverse the membrane as a helical segment. Residues A308–K311 lie on the Cytoplasmic side of the membrane. Residues F312–S332 form a helical membrane-spanning segment. Over G333 to T337 the chain is Periplasmic. A helical transmembrane segment spans residues L338–L358. The Cytoplasmic segment spans residues P359 to S369. Residues L370–L390 form a helical membrane-spanning segment. At P391–Q400 the chain is on the periplasmic side. The helical transmembrane segment at V401–A421 threads the bilayer. The Cytoplasmic portion of the chain corresponds to P422 to V445.

It belongs to the major facilitator superfamily. Sugar transporter (TC 2.A.1.1) family.

It localises to the cell inner membrane. The protein is Inner membrane metabolite transport protein YgcS (ygcS) of Escherichia coli (strain K12).